The chain runs to 790 residues: Vacuolar protein sorting-associated protein 35B (790 aa).

Belongs to the VPS35 family. As to quaternary structure, component of the retromer complex which consists of VPS29 (MAG1), VPS26 (VPS26A or VPS26B), VPS35 (VPS35A or VPS35B or VPS35C), VPS5/17 (SNX1 or SNX2A or SNX2B). Component of a retromer subcomplex consisting of VPS29 (MAG1), VPS26 (VPS26A or VPS26B), VPS35 (VPS35A or VPS35B or VPS35C). As to expression, expressed in siliques and maturing seeds (at protein level).

It is found in the cytoplasm. The protein resides in the endosome membrane. The protein localises to the prevacuolar compartment membrane. Its subcellular location is the golgi apparatus. It localises to the trans-Golgi network membrane. Functionally, plays a role in vesicular protein sorting. Component of the membrane-associated retromer complex which is essential in endosome-to-Golgi retrograde transport. Also involved in the efficient sorting of seed storage proteins globulin 12S and albumin 2S. The VPS29-VPS26-VPS35 subcomplex may be involved in recycling of specific cargos from endosome to the plasma membrane. This Arabidopsis thaliana (Mouse-ear cress) protein is Vacuolar protein sorting-associated protein 35B (VPS35B).